A 239-amino-acid polypeptide reads, in one-letter code: Increased recombination centers protein 22-1 (239 aa).

The signal sequence occupies residues 1–19; the sequence is MKLSTIFTAFAATIATVAG. The Lumenal segment spans residues 20-161; that stretch reads YETTGSKQTV…AAVSFFDPRL (142 aa). Residues 162 to 182 traverse the membrane as a helical segment; that stretch reads IFLELVLLITFAGLIYVGYEI. Residues 183 to 239 are Cytoplasmic-facing; it reads WGKQYFKGVAPVKAKKVSAAKASSPVASGPSTTSATGYDTNWIPESHLKQKKTKKVN. Over residues 201–213 the composition is skewed to low complexity; it reads AAKASSPVASGPS. The tract at residues 201–222 is disordered; it reads AAKASSPVASGPSTTSATGYDT.

It belongs to the IRC22 family.

Its subcellular location is the endoplasmic reticulum membrane. In terms of biological role, is probably involved in a pathway contributing to genomic integrity. The protein is Increased recombination centers protein 22-1 (IRC22-1) of Candida albicans (strain SC5314 / ATCC MYA-2876) (Yeast).